We begin with the raw amino-acid sequence, 523 residues long: Glycerate kinase (523 aa).

S60 is subject to Phosphoserine. N6-acetyllysine is present on K200.

It belongs to the glycerate kinase type-2 family. As to expression, expressed in the hippocampus, callus, brain, cerebellum, renal cortex interstitial cells, epithelium of interlobular bile duct and skeletal muscle.

It localises to the cytoplasm. The catalysed reaction is (R)-glycerate + ATP = (2R)-3-phosphoglycerate + ADP + H(+). This chain is Glycerate kinase (Glyctk), found in Mus musculus (Mouse).